The sequence spans 139 residues: Class I hydrophobin A (139 aa).

An N-terminal signal peptide occupies residues 1-18; the sequence is MKFSIAAAVLALASAVVA. Intrachain disulfides connect C45–C113, C53–C107, C54–C88, and C114–C133.

This sequence belongs to the fungal hydrophobin family. Self-assembles to form functional amyloid fibrils called rodlets. Self-assembly into fibrillar rodlets occurs spontaneously at hydrophobic:hydrophilic interfaces and the rodlets further associate laterally to form amphipathic monolayers.

Its subcellular location is the secreted. The protein localises to the cell wall. Aerial growth, conidiation, and dispersal of filamentous fungi in the environment rely upon a capability of their secreting small amphipathic proteins called hydrophobins (HPBs) with low sequence identity. Class I can self-assemble into an outermost layer of rodlet bundles on aerial cell surfaces, conferring cellular hydrophobicity that supports fungal growth, development and dispersal; whereas Class II form highly ordered films at water-air interfaces through intermolecular interactions but contribute nothing to the rodlet structure. HYPA is a class I hydrophobin that contributes to surface hydrophobicity, and prevents recognition by the cellular immune defense system. This is Class I hydrophobin A from Arthroderma benhamiae (strain ATCC MYA-4681 / CBS 112371) (Trichophyton mentagrophytes).